Here is a 735-residue protein sequence, read N- to C-terminus: Delta-1-pyrroline-5-carboxylate synthase 2 (735 aa).

A glutamate 5-kinase region spans residues 1 to 315 (MGRGGIGGAG…WGCSKEATAR (315 aa)). Substrate is bound by residues Ser79, Asp176, and Asn195. ATP contacts are provided by residues 215–216 (SD), 221–226 (YSGPPS), and 255–261 (RGGMQAK). The interval 316–735 (EMAVAARDCS…VYTHRELPLQ (420 aa)) is gamma-glutamyl phosphate reductase.

This sequence in the N-terminal section; belongs to the glutamate 5-kinase family. The protein in the C-terminal section; belongs to the gamma-glutamyl phosphate reductase family.

The enzyme catalyses L-glutamate + ATP = L-glutamyl 5-phosphate + ADP. The catalysed reaction is L-glutamate 5-semialdehyde + phosphate + NADP(+) = L-glutamyl 5-phosphate + NADPH + H(+). Its pathway is amino-acid biosynthesis; L-proline biosynthesis; L-glutamate 5-semialdehyde from L-glutamate: step 1/2. It participates in amino-acid biosynthesis; L-proline biosynthesis; L-glutamate 5-semialdehyde from L-glutamate: step 2/2. With respect to regulation, feedback regulated by proline. P5CS plays a key role in proline biosynthesis, leading to osmoregulation in plants. Involved in abiotic stress tolerance. This chain is Delta-1-pyrroline-5-carboxylate synthase 2, found in Oryza sativa subsp. japonica (Rice).